The chain runs to 343 residues: Aspartate carbamoyltransferase catalytic subunit (343 aa).

Positions 54 and 55 each coordinate carbamoyl phosphate. Lysine 82 is a binding site for L-aspartate. Residues arginine 104, histidine 134, and glutamine 137 each contribute to the carbamoyl phosphate site. 2 residues coordinate L-aspartate: arginine 177 and arginine 232. Carbamoyl phosphate contacts are provided by glycine 277 and proline 278. The tract at residues 323–343 (PDQSNPQRNVTNTSNWQETKR) is disordered.

Belongs to the aspartate/ornithine carbamoyltransferase superfamily. ATCase family. In terms of assembly, heterododecamer (2C3:3R2) of six catalytic PyrB chains organized as two trimers (C3), and six regulatory PyrI chains organized as three dimers (R2).

It catalyses the reaction carbamoyl phosphate + L-aspartate = N-carbamoyl-L-aspartate + phosphate + H(+). The protein operates within pyrimidine metabolism; UMP biosynthesis via de novo pathway; (S)-dihydroorotate from bicarbonate: step 2/3. Catalyzes the condensation of carbamoyl phosphate and aspartate to form carbamoyl aspartate and inorganic phosphate, the committed step in the de novo pyrimidine nucleotide biosynthesis pathway. This chain is Aspartate carbamoyltransferase catalytic subunit, found in Renibacterium salmoninarum (strain ATCC 33209 / DSM 20767 / JCM 11484 / NBRC 15589 / NCIMB 2235).